Consider the following 138-residue polypeptide: Cytochrome b5 (138 aa).

The region spanning 14–90 (GRYYRLEEVQ…SETFIIGELH (77 aa)) is the Cytochrome b5 heme-binding domain. Heme is bound by residues His49 and His73. A helical membrane pass occupies residues 114–136 (SWSNWVIPAIAAIIVALMYRSYM).

Belongs to the cytochrome b5 family.

The protein localises to the endoplasmic reticulum membrane. It localises to the microsome membrane. Its function is as follows. Cytochrome b5 is a membrane-bound hemoprotein functioning as an electron carrier for several membrane-bound oxygenases. This Gallus gallus (Chicken) protein is Cytochrome b5 (CYB5A).